Reading from the N-terminus, the 563-residue chain is Germacrene C/D synthase (563 aa).

The disordered stretch occupies residues 1 to 22; sequence MESCLSVSSAPPPKKNIQEPVR. Mg(2+) contacts are provided by Asp-315, Asp-319, and Glu-468. A DDXXD motif motif is present at residues 315–319; the sequence is DDTYD.

This sequence belongs to the terpene synthase family. Mg(2+) serves as cofactor. As to expression, predominantly expressed in root.

It catalyses the reaction (2E,6E)-farnesyl diphosphate = germacrene C + diphosphate. It carries out the reaction (2E,6E)-farnesyl diphosphate = (-)-germacrene D + diphosphate. In terms of biological role, mediates formation of germacrene C and germacrene D using farnesyl diphosphate as substrate. Can also catalyze formation of trace of germacrene B. The polypeptide is Germacrene C/D synthase (TPS1) (Valeriana officinalis (Valerian)).